The following is a 570-amino-acid chain: Probable metalloreductase AIM14 (570 aa).

Residues 1–20 (MKESPLITLVKRHSETHFAN) lie on the Extracellular side of the membrane. A helical transmembrane segment spans residues 21-41 (IKYGYYVLIISLVYLIGLALL). The Cytoplasmic portion of the chain corresponds to 42 to 69 (RAFGRRTPSRSSSAFKNKIIYRLYDIDP). The chain crosses the membrane as a helical span at residues 70-90 (AIHLGILFFAVLIPFYYHYSL). Topologically, residues 91–141 (TTQSTVYLKRLGRLSYALIPLNLFLTLRPNWFLRKNCTYTDFIPFHKWFSR) are extracellular. The Ferric oxidoreductase domain maps to 101-219 (LGRLSYALIP…NLVNVAFILL (119 aa)). Residues 142–162 (IITVIGLLHGIFFIIKWAIDD) form a helical membrane-spanning segment. The Cytoplasmic portion of the chain corresponds to 163 to 176 (NVSLKQKLILKTFN). A helical transmembrane segment spans residues 177–197 (FAGFIISILVLFLLICSIGPM). Over 198 to 373 (RRYNYRLFYI…PEECYSQGTN (176 aa)) the chain is Extracellular. Positions 250-388 (FAKSLMILNK…GGSGISFALP (139 aa)) constitute an FAD-binding FR-type domain. The helical transmembrane segment at 374-394 (IAIICGGSGISFALPLFRHFF) threads the bilayer. Over 395-570 (NKENVKYLKM…INFVCETYGL (176 aa)) the chain is Cytoplasmic. Residues 480–505 (ISNFNSENADSNDNTPETSHSPTKEN) show a composition bias toward polar residues. A disordered region spans residues 480–509 (ISNFNSENADSNDNTPETSHSPTKENGSMI).

This sequence belongs to the ferric reductase (FRE) family. AIM14 subfamily. In terms of assembly, interacts with ribosomes.

The protein localises to the membrane. Probable cell surface metalloreductase. May be involved in iron or copper homeostasis. This Saccharomyces cerevisiae (strain ATCC 204508 / S288c) (Baker's yeast) protein is Probable metalloreductase AIM14 (AIM14).